Consider the following 106-residue polypeptide: Small ribosomal subunit protein uS10 (106 aa).

It belongs to the universal ribosomal protein uS10 family. In terms of assembly, part of the 30S ribosomal subunit.

In terms of biological role, involved in the binding of tRNA to the ribosomes. This chain is Small ribosomal subunit protein uS10, found in Pyrobaculum aerophilum (strain ATCC 51768 / DSM 7523 / JCM 9630 / CIP 104966 / NBRC 100827 / IM2).